Reading from the N-terminus, the 71-residue chain is Small ribosomal subunit protein bS21 (71 aa).

Basic residues predominate over residues 48 to 59; sequence AKASAVKRHAKK. A disordered region spans residues 48 to 71; sequence AKASAVKRHAKKLSRENARRIRLY. Residues 60 to 71 show a composition bias toward basic and acidic residues; it reads LSRENARRIRLY.

This sequence belongs to the bacterial ribosomal protein bS21 family.

In Aeromonas hydrophila subsp. hydrophila (strain ATCC 7966 / DSM 30187 / BCRC 13018 / CCUG 14551 / JCM 1027 / KCTC 2358 / NCIMB 9240 / NCTC 8049), this protein is Small ribosomal subunit protein bS21.